The chain runs to 219 residues: 3-dehydroquinate dehydratase (219 aa).

Residues serine 10, 29-31, and arginine 59 each bind 3-dehydroquinate; that span reads EVR. Residue histidine 116 is the Proton donor/acceptor of the active site. The active-site Schiff-base intermediate with substrate is lysine 142. 3-dehydroquinate contacts are provided by arginine 180 and glutamine 203.

This sequence belongs to the type-I 3-dehydroquinase family. Homodimer.

It catalyses the reaction 3-dehydroquinate = 3-dehydroshikimate + H2O. The protein operates within metabolic intermediate biosynthesis; chorismate biosynthesis; chorismate from D-erythrose 4-phosphate and phosphoenolpyruvate: step 3/7. Involved in the third step of the chorismate pathway, which leads to the biosynthesis of aromatic amino acids. Catalyzes the cis-dehydration of 3-dehydroquinate (DHQ) and introduces the first double bond of the aromatic ring to yield 3-dehydroshikimate. The sequence is that of 3-dehydroquinate dehydratase from Methanocella arvoryzae (strain DSM 22066 / NBRC 105507 / MRE50).